Consider the following 311-residue polypeptide: MQIKLKDVKFTFNLKSSWEFQALHGIDFEVNQGEYVGIIGQTGSGKTTLIEHLNALLMPTTGTVEWIYKDEVFDKATKTKKEVVVTDVIGLKKVRKFKKVKQIRKRIGVVFQFAEYQLFKATVLEDIIFGPVSYGMDPKEAEEKAKKYIKLVGLPEEYLKRSPFDLSGGQKRRVALAGILAMEPDVLVVDEPTAGLDPWGVKEILDILTHLHESGKTIINVTHDLDHVLERAKRVIVLKNGKIIKDGQPYETLNDIAFLEENNLQPPKLLNFVNKLRAKGVNVPKVTSEAELVSWINDYMETKNKKEVSNE.

In terms of domain architecture, ABC transporter spans 3–265; the sequence is IKLKDVKFTF…IAFLEENNLQ (263 aa). Residue 40–47 participates in ATP binding; sequence GQTGSGKT.

It belongs to the ABC transporter superfamily. Energy-coupling factor EcfA family. Forms a stable energy-coupling factor (ECF) transporter complex composed of 2 membrane-embedded substrate-binding proteins (S component), 2 ATP-binding proteins (A component) and 2 transmembrane proteins (T component).

It localises to the cell membrane. Functionally, ATP-binding (A) component of a common energy-coupling factor (ECF) ABC-transporter complex. Unlike classic ABC transporters this ECF transporter provides the energy necessary to transport a number of different substrates. The polypeptide is Energy-coupling factor transporter ATP-binding protein EcfA2 (Mycoplasmopsis synoviae (strain 53) (Mycoplasma synoviae)).